Reading from the N-terminus, the 153-residue chain is MTPVQRRRLVWVLLALLASGLATALVAMALERNIAYLYTPSEVLRGDVDAQSRFRLGGMVVKGSFNRPVGSLEARFEVTDGDAQLAVTTSRILPDMFAEGTAVVASGRLQDGIFVADEVLAKHDEKYVPKEVADKMGDAHRKHDVPVTAPEVR.

The Cytoplasmic segment spans residues 1–8 (MTPVQRRR). A helical; Signal-anchor for type II membrane protein transmembrane segment spans residues 9-29 (LVWVLLALLASGLATALVAMA). Residues 30 to 153 (LERNIAYLYT…DVPVTAPEVR (124 aa)) are Periplasmic-facing. Residues histidine 123 and tyrosine 127 each coordinate heme.

It belongs to the CcmE/CycJ family.

The protein localises to the cell inner membrane. In terms of biological role, heme chaperone required for the biogenesis of c-type cytochromes. Transiently binds heme delivered by CcmC and transfers the heme to apo-cytochromes in a process facilitated by CcmF and CcmH. The chain is Cytochrome c-type biogenesis protein CcmE from Stenotrophomonas maltophilia (strain R551-3).